Here is a 353-residue protein sequence, read N- to C-terminus: GDSL esterase/lipase At5g03810 (353 aa).

Residues 1–24 (MKMFITMSMCLSVIACFYAGVGTG) form the signal peptide. S37 functions as the Nucleophile in the catalytic mechanism. Residues N100, N255, N256, N260, and N320 are each glycosylated (N-linked (GlcNAc...) asparagine). Residues D328 and H331 contribute to the active site.

This sequence belongs to the 'GDSL' lipolytic enzyme family.

The protein localises to the secreted. The sequence is that of GDSL esterase/lipase At5g03810 from Arabidopsis thaliana (Mouse-ear cress).